The primary structure comprises 704 residues: Elongation factor G (704 aa).

Positions 8-290 (EKYRNIGICA…GVVRYLPAPN (283 aa)) constitute a tr-type G domain. GTP contacts are provided by residues 17–24 (AHVDAGKT), 88–92 (DTPGH), and 142–145 (NKMD).

This sequence belongs to the TRAFAC class translation factor GTPase superfamily. Classic translation factor GTPase family. EF-G/EF-2 subfamily.

It is found in the cytoplasm. Catalyzes the GTP-dependent ribosomal translocation step during translation elongation. During this step, the ribosome changes from the pre-translocational (PRE) to the post-translocational (POST) state as the newly formed A-site-bound peptidyl-tRNA and P-site-bound deacylated tRNA move to the P and E sites, respectively. Catalyzes the coordinated movement of the two tRNA molecules, the mRNA and conformational changes in the ribosome. This chain is Elongation factor G, found in Francisella tularensis subsp. tularensis (strain FSC 198).